A 194-amino-acid chain; its full sequence is Pyridoxal 5'-phosphate synthase subunit PdxT (194 aa).

Residue 54–56 (GES) coordinates L-glutamine. Residue cysteine 83 is the Nucleophile of the active site. Residues arginine 110 and 139-140 (IR) each bind L-glutamine. Active-site charge relay system residues include histidine 175 and glutamate 177.

Belongs to the glutaminase PdxT/SNO family. In the presence of PdxS, forms a dodecamer of heterodimers. Only shows activity in the heterodimer.

The enzyme catalyses aldehydo-D-ribose 5-phosphate + D-glyceraldehyde 3-phosphate + L-glutamine = pyridoxal 5'-phosphate + L-glutamate + phosphate + 3 H2O + H(+). It carries out the reaction L-glutamine + H2O = L-glutamate + NH4(+). It participates in cofactor biosynthesis; pyridoxal 5'-phosphate biosynthesis. Its function is as follows. Catalyzes the hydrolysis of glutamine to glutamate and ammonia as part of the biosynthesis of pyridoxal 5'-phosphate. The resulting ammonia molecule is channeled to the active site of PdxS. The protein is Pyridoxal 5'-phosphate synthase subunit PdxT of Methanoregula boonei (strain DSM 21154 / JCM 14090 / 6A8).